The following is a 446-amino-acid chain: Chromosomal replication initiator protein DnaA (446 aa).

The tract at residues 1 to 73 is domain I, interacts with DnaA modulators; sequence MAAQLNELWQ…INSMKIITTK (73 aa). Residues 73–107 are domain II; the sequence is KKYDIAFLISSEEALETDEDQETDTNNVNTDTSSS. Residues 108-324 form a domain III, AAA+ region region; that stretch reads MLNPKYKFDS…GALIRIVAFS (217 aa). ATP is bound by residues Gly152, Gly154, Lys155, and Thr156. The interval 325-446 is domain IV, binds dsDNA; it reads SLTNKEISVD…NEITKRFSPK (122 aa).

It belongs to the DnaA family. In terms of assembly, oligomerizes as a right-handed, spiral filament on DNA at oriC.

It localises to the cytoplasm. In terms of biological role, plays an essential role in the initiation and regulation of chromosomal replication. ATP-DnaA binds to the origin of replication (oriC) to initiate formation of the DNA replication initiation complex once per cell cycle. Binds the DnaA box (a 9 base pair repeat at the origin) and separates the double-stranded (ds)DNA. Forms a right-handed helical filament on oriC DNA; dsDNA binds to the exterior of the filament while single-stranded (ss)DNA is stabiized in the filament's interior. The ATP-DnaA-oriC complex binds and stabilizes one strand of the AT-rich DNA unwinding element (DUE), permitting loading of DNA polymerase. After initiation quickly degrades to an ADP-DnaA complex that is not apt for DNA replication. Binds acidic phospholipids. The chain is Chromosomal replication initiator protein DnaA from Clostridium acetobutylicum (strain ATCC 824 / DSM 792 / JCM 1419 / IAM 19013 / LMG 5710 / NBRC 13948 / NRRL B-527 / VKM B-1787 / 2291 / W).